The sequence spans 154 residues: Crossover junction endodeoxyribonuclease RuvC (154 aa).

Catalysis depends on residues Asp-7, Glu-67, and Asp-139. Mg(2+)-binding residues include Asp-7, Glu-67, and Asp-139.

Belongs to the RuvC family. As to quaternary structure, homodimer which binds Holliday junction (HJ) DNA. The HJ becomes 2-fold symmetrical on binding to RuvC with unstacked arms; it has a different conformation from HJ DNA in complex with RuvA. In the full resolvosome a probable DNA-RuvA(4)-RuvB(12)-RuvC(2) complex forms which resolves the HJ. Mg(2+) serves as cofactor.

The protein localises to the cytoplasm. It carries out the reaction Endonucleolytic cleavage at a junction such as a reciprocal single-stranded crossover between two homologous DNA duplexes (Holliday junction).. Its function is as follows. The RuvA-RuvB-RuvC complex processes Holliday junction (HJ) DNA during genetic recombination and DNA repair. Endonuclease that resolves HJ intermediates. Cleaves cruciform DNA by making single-stranded nicks across the HJ at symmetrical positions within the homologous arms, yielding a 5'-phosphate and a 3'-hydroxyl group; requires a central core of homology in the junction. The consensus cleavage sequence is 5'-(A/T)TT(C/G)-3'. Cleavage occurs on the 3'-side of the TT dinucleotide at the point of strand exchange. HJ branch migration catalyzed by RuvA-RuvB allows RuvC to scan DNA until it finds its consensus sequence, where it cleaves and resolves the cruciform DNA. The polypeptide is Crossover junction endodeoxyribonuclease RuvC (Prochlorococcus marinus (strain NATL1A)).